We begin with the raw amino-acid sequence, 1072 residues long: DNA-directed RNA polymerase subunit beta (1072 aa).

Belongs to the RNA polymerase beta chain family. In plastids the minimal PEP RNA polymerase catalytic core is composed of four subunits: alpha, beta, beta', and beta''. When a (nuclear-encoded) sigma factor is associated with the core the holoenzyme is formed, which can initiate transcription.

Its subcellular location is the plastid. The protein localises to the chloroplast. The enzyme catalyses RNA(n) + a ribonucleoside 5'-triphosphate = RNA(n+1) + diphosphate. Functionally, DNA-dependent RNA polymerase catalyzes the transcription of DNA into RNA using the four ribonucleoside triphosphates as substrates. This is DNA-directed RNA polymerase subunit beta from Capsella bursa-pastoris (Shepherd's purse).